A 377-amino-acid polypeptide reads, in one-letter code: Exopolygalacturonase (377 aa).

The N-terminal stretch at Arg1–Ser5 is a signal peptide. PbH1 repeat units lie at residues Cys159–Gly184, Ser186–Pro207, Ser209–Ser229, Val239–Thr260, and Ala269–Gln290. Residue Asp200 is the Proton donor of the active site. Asn211 carries an N-linked (GlcNAc...) asparagine glycan. His223 is a catalytic residue. An N-linked (GlcNAc...) asparagine glycan is attached at Asn345.

It belongs to the glycosyl hydrolase 28 family. Monomer. Glycosylated. In terms of tissue distribution, expressed in pollen (at protein level). Expressed in stem, but not in leaves (at protein level).

It localises to the secreted. The protein resides in the cell wall. It is found in the golgi apparatus. The protein localises to the endoplasmic reticulum. Its subcellular location is the vesicle. It carries out the reaction [(1-&gt;4)-alpha-D-galacturonosyl](n) + H2O = alpha-D-galacturonate + [(1-&gt;4)-alpha-D-galacturonosyl](n-1). May function in depolymerizing pectin during pollen development, germination, and tube growth. Acts as an exo-polygalacturonase. The protein is Exopolygalacturonase of Platanus acerifolia (London plane tree).